Consider the following 723-residue polypeptide: Transcription factor E2F7 (723 aa).

Residues 121-146 (AEEEEEEELDDSCQYEALDESERRPS) are disordered. A compositionally biased stretch (acidic residues) spans 122–139 (EEEEEEELDDSCQYEALD). 2 DNA-binding regions span residues 147 to 216 (RKQK…VWHG) and 264 to 349 (RKDK…KWIG). Polar residues-rich tracts occupy residues 356–370 (SSNSDDLRGQISNSG) and 395–405 (LISSAPSTPHR). Disordered stretches follow at residues 356 to 379 (SSNSDDLRGQISNSGTERREKMAR), 395 to 417 (LISSAPSTPHRYSTDEPVDYSRK), 489 to 546 (SLRK…ASFG), 650 to 689 (EHHGNVPATTSSPRAEESPKPAQTQTPVTPKEASLGSKSF), and 702 to 723 (QSAARKRGSAQRRLDIGHTAAN). The span at 494 to 503 (ERSEEDDHQT) shows a compositional bias: basic and acidic residues. Residues 520–535 (SESLSSSTRRSPVCSP) show a composition bias toward low complexity.

Belongs to the E2F/DP family. Homodimer and heterodimer: mainly forms homodimers and, to a lesser extent, heterodimers with e2f8.

It localises to the nucleus. Functionally, atypical E2F transcription factor that participates in various processes such as angiogenesis and polyploidization of specialized cells. Mainly acts as a transcription repressor that binds DNA independently of DP proteins and specifically recognizes the E2 recognition site 5'-TTTC[CG]CGC-3'. Directly represses transcription of classical E2F transcription factors such as e2f1. Acts as a regulator of S-phase by recognizing and binding the E2-related site 5'-TTCCCGCC-3' and mediating repression of G1/S-regulated genes. Acts as a promoter of sprouting angiogenesis, possibly by acting as a transcription activator and promoting expression of vegfa. This Danio rerio (Zebrafish) protein is Transcription factor E2F7 (e2f7).